Reading from the N-terminus, the 168-residue chain is ATP synthase F(1) complex subunit delta, mitochondrial (168 aa).

Residues 1-22 (MLPAALLRHPGLRRLVLQARTY) constitute a mitochondrion transit peptide. An N6-acetyllysine; alternate mark is found at K136 and K165. An N6-succinyllysine; alternate mark is found at K136 and K165.

The protein belongs to the ATPase epsilon chain family. Component of the ATP synthase complex composed at least of ATP5F1A/subunit alpha, ATP5F1B/subunit beta, ATP5MC1/subunit c (homooctomer), MT-ATP6/subunit a, MT-ATP8/subunit 8, ATP5ME/subunit e, ATP5MF/subunit f, ATP5MG/subunit g, ATP5MK/subunit k, ATP5MJ/subunit j, ATP5F1C/subunit gamma, ATP5F1D/subunit delta, ATP5F1E/subunit epsilon, ATP5PF/subunit F6, ATP5PB/subunit b, ATP5PD/subunit d, ATP5PO/subunit OSCP. ATP synthase complex consists of a soluble F(1) head domain (subunits alpha(3) and beta(3)) - the catalytic core - and a membrane F(0) domain - the membrane proton channel (subunits c, a, 8, e, f, g, k and j). These two domains are linked by a central stalk (subunits gamma, delta, and epsilon) rotating inside the F1 region and a stationary peripheral stalk (subunits F6, b, d, and OSCP). Component of a complex composed at least by ATPIF1, ATP5F1A, ATP5F1B, ATP5F1C AND ATP5F1E.

The protein localises to the mitochondrion. It is found in the mitochondrion inner membrane. Functionally, subunit delta, of the mitochondrial membrane ATP synthase complex (F(1)F(0) ATP synthase or Complex V) that produces ATP from ADP in the presence of a proton gradient across the membrane which is generated by electron transport complexes of the respiratory chain. ATP synthase complex consist of a soluble F(1) head domain - the catalytic core - and a membrane F(1) domain - the membrane proton channel. These two domains are linked by a central stalk rotating inside the F(1) region and a stationary peripheral stalk. During catalysis, ATP synthesis in the catalytic domain of F(1) is coupled via a rotary mechanism of the central stalk subunits to proton translocation. In vivo, can only synthesize ATP although its ATP hydrolase activity can be activated artificially in vitro. With the central stalk subunit gamma, is essential for the biogenesis of F(1) catalytic part of the ATP synthase complex namely in the formation of F1 assembly intermediate. This Rattus norvegicus (Rat) protein is ATP synthase F(1) complex subunit delta, mitochondrial.